A 289-amino-acid polypeptide reads, in one-letter code: Urease accessory protein UreD (289 aa).

Belongs to the UreD family. UreD, UreF and UreG form a complex that acts as a GTP-hydrolysis-dependent molecular chaperone, activating the urease apoprotein by helping to assemble the nickel containing metallocenter of UreC. The UreE protein probably delivers the nickel.

The protein resides in the cytoplasm. Its function is as follows. Required for maturation of urease via the functional incorporation of the urease nickel metallocenter. The protein is Urease accessory protein UreD of Cupriavidus pinatubonensis (strain JMP 134 / LMG 1197) (Cupriavidus necator (strain JMP 134)).